The sequence spans 310 residues: Upstream stimulatory factor 1 (310 aa).

The segment covering 1–17 (MKGQQKTAETEEGTVQI) has biased composition (polar residues). Disordered stretches follow at residues 1-26 (MKGQ…ATGE) and 171-209 (QGGS…EVER). Over residues 194–209 (TTRDEKRRAQHNEVER) the composition is skewed to basic and acidic residues. In terms of domain architecture, bHLH spans 199-254 (KRRAQHNEVERRRRDKINNWIVQLSKIIPDCSMESTKSGQSKGGILSKACDYIQEL). The tract at residues 271–292 (LQLDNDVLRQQVEDLKNKNLLL) is leucine-zipper. Residue K306 forms a Glycyl lysine isopeptide (Lys-Gly) (interchain with G-Cter in SUMO2) linkage.

Efficient DNA binding requires dimerization with another bHLH protein. Binds DNA as a homodimer or a heterodimer (USF1/USF2).

The protein resides in the nucleus. Transcription factor that binds to a symmetrical DNA sequence (E-boxes) (5'-CACGTG-3') that is found in a variety of viral and cellular promoters. Regulates the expression of the surfactant protein-A (SP-A) gene. The chain is Upstream stimulatory factor 1 (USF1) from Oryctolagus cuniculus (Rabbit).